We begin with the raw amino-acid sequence, 406 residues long: uncharacterized protein (406 aa).

This is an uncharacterized protein from Aquifex aeolicus (strain VF5).